Consider the following 95-residue polypeptide: Defensin-A3 (95 aa).

An N-terminal signal peptide occupies residues 1–19; sequence MRTLGLLLALLFLAAQTPA. Positions 20–61 are excised as a propeptide; it reads QLMGEEAEEATGRPEATEAQEAAAALMAARAADRHVTDPEQQ. Cystine bridges form between Cys66–Cys93, Cys68–Cys82, and Cys72–Cys92.

It belongs to the alpha-defensin family. As to expression, highly expressed in spleen, and expressed at lower levels in intestin and lung.

Its subcellular location is the secreted. Functionally, has antimicrobial activity. The sequence is that of Defensin-A3 from Ornithorhynchus anatinus (Duckbill platypus).